The primary structure comprises 145 residues: Cuticle protein 5 (145 aa).

In Blaberus craniifer (Death's head cockroach), this protein is Cuticle protein 5.